The sequence spans 810 residues: DNA gyrase subunit A (810 aa).

The 467-residue stretch at 36–502 (LPDVRDGLKP…EVLKTSMSDL (467 aa)) folds into the Topo IIA-type catalytic domain. The O-(5'-phospho-DNA)-tyrosine intermediate role is filled by Y124. The C-terminal domain stretch occupies residues 499–810 (MSDLMQKENI…SLVSVSKFIK (312 aa)). Residues 529-535 (QGTGGKG) carry the GyrA-box motif.

It belongs to the type II topoisomerase GyrA/ParC subunit family. Heterotetramer, composed of two GyrA and two GyrB chains. In the heterotetramer, GyrA contains the active site tyrosine that forms a transient covalent intermediate with DNA, while GyrB binds cofactors and catalyzes ATP hydrolysis.

It localises to the cytoplasm. The enzyme catalyses ATP-dependent breakage, passage and rejoining of double-stranded DNA.. Its function is as follows. A type II topoisomerase that negatively supercoils closed circular double-stranded (ds) DNA in an ATP-dependent manner to modulate DNA topology and maintain chromosomes in an underwound state. Negative supercoiling favors strand separation, and DNA replication, transcription, recombination and repair, all of which involve strand separation. Also able to catalyze the interconversion of other topological isomers of dsDNA rings, including catenanes and knotted rings. Type II topoisomerases break and join 2 DNA strands simultaneously in an ATP-dependent manner. The sequence is that of DNA gyrase subunit A from Borreliella burgdorferi (strain ATCC 35210 / DSM 4680 / CIP 102532 / B31) (Borrelia burgdorferi).